Here is a 148-residue protein sequence, read N- to C-terminus: Cytochrome c-552 (148 aa).

Positions 1–17 are cleaved as a signal peptide; the sequence is MKRTLMAFLLLGGLALA. Position 18 is a pyrrolidone carboxylic acid (glutamine 18). Heme c is bound by residues cysteine 28, cysteine 31, histidine 32, and methionine 86.

Post-translationally, binds 1 heme c group covalently per subunit.

Its function is as follows. This monoheme basic protein appears to function as an electron donor to cytochrome oxidase in T.thermophilus. This Thermus thermophilus (strain ATCC 27634 / DSM 579 / HB8) protein is Cytochrome c-552 (cycA).